The following is a 558-amino-acid chain: Ankyrin repeat protein OPG189 (558 aa).

ANK repeat units lie at residues 65–95 (YGEN…NINK), 169–205 (YGCT…DVDK), 209–239 (HGNT…NIDS), 243–272 (NGYT…NVNT), 276–304 (FGTT…ELEI), 339–368 (YNET…DFET), and 372–401 (SGCT…SLKI).

This sequence belongs to the orthopoxvirus OPG189 protein family.

Functionally, contributes to viral release without involving rearrangement of host actin. In Homo sapiens (Human), this protein is Ankyrin repeat protein OPG189 (OPG189).